We begin with the raw amino-acid sequence, 157 residues long: Protein Smg homolog (157 aa).

The protein belongs to the Smg family.

The chain is Protein Smg homolog from Shewanella piezotolerans (strain WP3 / JCM 13877).